The sequence spans 205 residues: Urease accessory protein UreG (205 aa).

11 to 18 (GPVGSGKT) is a GTP binding site.

The protein belongs to the SIMIBI class G3E GTPase family. UreG subfamily. As to quaternary structure, homodimer. UreD, UreF and UreG form a complex that acts as a GTP-hydrolysis-dependent molecular chaperone, activating the urease apoprotein by helping to assemble the nickel containing metallocenter of UreC. The UreE protein probably delivers the nickel.

The protein resides in the cytoplasm. Its function is as follows. Facilitates the functional incorporation of the urease nickel metallocenter. This process requires GTP hydrolysis, probably effectuated by UreG. This chain is Urease accessory protein UreG, found in Prochlorococcus marinus (strain NATL1A).